A 106-amino-acid chain; its full sequence is Large ribosomal subunit protein uL24 (106 aa).

A compositionally biased stretch (basic and acidic residues) spans Glu-84–Arg-97. The tract at residues Glu-84–Lys-106 is disordered.

The protein belongs to the universal ribosomal protein uL24 family. In terms of assembly, part of the 50S ribosomal subunit.

One of two assembly initiator proteins, it binds directly to the 5'-end of the 23S rRNA, where it nucleates assembly of the 50S subunit. Functionally, one of the proteins that surrounds the polypeptide exit tunnel on the outside of the subunit. In Anaeromyxobacter dehalogenans (strain 2CP-C), this protein is Large ribosomal subunit protein uL24.